The sequence spans 226 residues: ATP synthase subunit a (226 aa).

The next 6 helical transmembrane spans lie at 18 to 38 (FITG…SLGA), 76 to 96 (YFPL…IGII), 105 to 125 (SWSF…FEGI), 134 to 154 (FAHF…IEII), 179 to 199 (LIML…VLFF), and 201 to 221 (GILQ…GAVL).

The protein belongs to the ATPase A chain family. F-type ATPases have 2 components, CF(1) - the catalytic core - and CF(0) - the membrane proton channel. CF(1) has five subunits: alpha(3), beta(3), gamma(1), delta(1), epsilon(1). CF(0) has three main subunits: a(1), b(2) and c(9-12). The alpha and beta chains form an alternating ring which encloses part of the gamma chain. CF(1) is attached to CF(0) by a central stalk formed by the gamma and epsilon chains, while a peripheral stalk is formed by the delta and b chains.

It is found in the cell inner membrane. Functionally, key component of the proton channel; it plays a direct role in the translocation of protons across the membrane. The protein is ATP synthase subunit a of Helicobacter acinonychis (strain Sheeba).